Here is a 229-residue protein sequence, read N- to C-terminus: Large ribosomal subunit protein uL1 (229 aa).

This sequence belongs to the universal ribosomal protein uL1 family. In terms of assembly, part of the 50S ribosomal subunit.

Its function is as follows. Binds directly to 23S rRNA. The L1 stalk is quite mobile in the ribosome, and is involved in E site tRNA release. Protein L1 is also a translational repressor protein, it controls the translation of the L11 operon by binding to its mRNA. The chain is Large ribosomal subunit protein uL1 from Actinobacillus succinogenes (strain ATCC 55618 / DSM 22257 / CCUG 43843 / 130Z).